Reading from the N-terminus, the 338-residue chain is L-serine dehydratase (338 aa).

Position 39 is an N6-(pyridoxal phosphate)lysine (Lys-39).

This sequence belongs to the serine/threonine dehydratase family. Pyridoxal 5'-phosphate is required as a cofactor.

The protein resides in the cytoplasm. The enzyme catalyses L-serine = pyruvate + NH4(+). Its pathway is carbohydrate biosynthesis; gluconeogenesis. This Saccharomyces cerevisiae (strain RM11-1a) (Baker's yeast) protein is L-serine dehydratase (SDL1).